A 94-amino-acid chain; its full sequence is Co-chaperonin GroES (94 aa).

Belongs to the GroES chaperonin family. In terms of assembly, heptamer of 7 subunits arranged in a ring. Interacts with the chaperonin GroEL.

It is found in the cytoplasm. Its function is as follows. Together with the chaperonin GroEL, plays an essential role in assisting protein folding. The GroEL-GroES system forms a nano-cage that allows encapsulation of the non-native substrate proteins and provides a physical environment optimized to promote and accelerate protein folding. GroES binds to the apical surface of the GroEL ring, thereby capping the opening of the GroEL channel. The sequence is that of Co-chaperonin GroES from Bacillus cereus (strain ZK / E33L).